We begin with the raw amino-acid sequence, 700 residues long: Elongation factor G (700 aa).

The 283-residue stretch at 8-290 (SLYRNIGISA…AVIDYLPAPT (283 aa)) folds into the tr-type G domain. Residues 17–24 (AHIDAGKT), 88–92 (DTPGH), and 142–145 (NKMD) contribute to the GTP site.

Belongs to the TRAFAC class translation factor GTPase superfamily. Classic translation factor GTPase family. EF-G/EF-2 subfamily.

It localises to the cytoplasm. Catalyzes the GTP-dependent ribosomal translocation step during translation elongation. During this step, the ribosome changes from the pre-translocational (PRE) to the post-translocational (POST) state as the newly formed A-site-bound peptidyl-tRNA and P-site-bound deacylated tRNA move to the P and E sites, respectively. Catalyzes the coordinated movement of the two tRNA molecules, the mRNA and conformational changes in the ribosome. This Histophilus somni (strain 129Pt) (Haemophilus somnus) protein is Elongation factor G.